A 147-amino-acid polypeptide reads, in one-letter code: HTH-type transcriptional regulator MntR (147 aa).

The region spanning 1–63 is the HTH dtxR-type domain; it reads MPTPSMEDYI…YEKYRGFVLT (63 aa). 6 residues coordinate Mn(2+): aspartate 8, glutamate 11, histidine 77, glutamate 99, glutamate 102, and histidine 103.

It belongs to the DtxR/MntR family. As to quaternary structure, homodimer.

Its subcellular location is the cytoplasm. With respect to regulation, DNA binding is strongly activated by Mn(2+). Its function is as follows. Central regulator of manganese homeostasis. In Oceanobacillus iheyensis (strain DSM 14371 / CIP 107618 / JCM 11309 / KCTC 3954 / HTE831), this protein is HTH-type transcriptional regulator MntR.